The primary structure comprises 366 residues: Histidinol-phosphate aminotransferase 2 (366 aa).

Over residues M1–Q11 the composition is skewed to polar residues. Residues M1 to Q21 form a disordered region. At K222 the chain carries N6-(pyridoxal phosphate)lysine.

The protein belongs to the class-II pyridoxal-phosphate-dependent aminotransferase family. Histidinol-phosphate aminotransferase subfamily. Homodimer. Pyridoxal 5'-phosphate serves as cofactor.

The catalysed reaction is L-histidinol phosphate + 2-oxoglutarate = 3-(imidazol-4-yl)-2-oxopropyl phosphate + L-glutamate. It participates in amino-acid biosynthesis; L-histidine biosynthesis; L-histidine from 5-phospho-alpha-D-ribose 1-diphosphate: step 7/9. The sequence is that of Histidinol-phosphate aminotransferase 2 from Bacillus cereus (strain ATCC 10987 / NRS 248).